We begin with the raw amino-acid sequence, 234 residues long: Urease accessory protein UreF (234 aa).

It belongs to the UreF family. In terms of assembly, ureD, UreF and UreG form a complex that acts as a GTP-hydrolysis-dependent molecular chaperone, activating the urease apoprotein by helping to assemble the nickel containing metallocenter of UreC. The UreE protein probably delivers the nickel.

It is found in the cytoplasm. In terms of biological role, required for maturation of urease via the functional incorporation of the urease nickel metallocenter. The sequence is that of Urease accessory protein UreF from Azoarcus sp. (strain BH72).